Reading from the N-terminus, the 187-residue chain is Lipoprotein signal peptidase (187 aa).

A run of 3 helical transmembrane segments spans residues 12–32 (VAVF…TKMW), 68–88 (MTWL…VLAV), and 91–111 (ISMK…GNLI). Catalysis depends on residues Asp127 and Asp140. The chain crosses the membrane as a helical span at residues 141 to 161 (IFLMLAGVAAVLLLFLGEPFS). The interval 167 to 187 (EANGKTLGDDANATDDGAKAA) is disordered.

Belongs to the peptidase A8 family.

Its subcellular location is the cell membrane. It catalyses the reaction Release of signal peptides from bacterial membrane prolipoproteins. Hydrolyzes -Xaa-Yaa-Zaa-|-(S,diacylglyceryl)Cys-, in which Xaa is hydrophobic (preferably Leu), and Yaa (Ala or Ser) and Zaa (Gly or Ala) have small, neutral side chains.. It participates in protein modification; lipoprotein biosynthesis (signal peptide cleavage). In terms of biological role, this protein specifically catalyzes the removal of signal peptides from prolipoproteins. This Bifidobacterium adolescentis (strain ATCC 15703 / DSM 20083 / NCTC 11814 / E194a) protein is Lipoprotein signal peptidase.